Reading from the N-terminus, the 221-residue chain is MESSRWDKDPPGERRPQQSQHWRARDHGARGCGPRQPTATASPRPGLWITPAHGSHTPQTNTRRTQADNIFIYESWLIHHGTQMSSVLPQPPLVRGPWHNTNSPWDSWASRGKLRVCPCRTPRLHSSGCFSSKAGTALSPSLPVPGLRPQPPFLQKPLSILAPATPPALVSPTPPKLSPGQLSPHSVNVHWGPQGHLHLPRSGTTVLHAYLQTLSSPASHQ.

Positions 1–16 (MESSRWDKDPPGERRP) are enriched in basic and acidic residues. Positions 1-64 (MESSRWDKDP…SHTPQTNTRR (64 aa)) are disordered.

This is an uncharacterized protein from Homo sapiens (Human).